Here is a 203-residue protein sequence, read N- to C-terminus: Urease accessory protein UreG (203 aa).

Residue 11–18 coordinates GTP; the sequence is GPVGSGKT.

The protein belongs to the SIMIBI class G3E GTPase family. UreG subfamily. In terms of assembly, homodimer. UreD, UreF and UreG form a complex that acts as a GTP-hydrolysis-dependent molecular chaperone, activating the urease apoprotein by helping to assemble the nickel containing metallocenter of UreC. The UreE protein probably delivers the nickel.

It localises to the cytoplasm. Functionally, facilitates the functional incorporation of the urease nickel metallocenter. This process requires GTP hydrolysis, probably effectuated by UreG. This chain is Urease accessory protein UreG, found in Prochlorococcus marinus (strain MIT 9301).